The chain runs to 610 residues: UvrABC system protein C (610 aa).

A GIY-YIG domain is found at 16 to 94 (NQPGVYRMYN…IKQYLPKYNV (79 aa)). The UVR domain maps to 204–239 (NQVLSILVEKMEQASRELRFEDAAKARDQIQAIRRV).

The protein belongs to the UvrC family. Interacts with UvrB in an incision complex.

The protein resides in the cytoplasm. Its function is as follows. The UvrABC repair system catalyzes the recognition and processing of DNA lesions. UvrC both incises the 5' and 3' sides of the lesion. The N-terminal half is responsible for the 3' incision and the C-terminal half is responsible for the 5' incision. In Vibrio cholerae serotype O1 (strain ATCC 39315 / El Tor Inaba N16961), this protein is UvrABC system protein C.